The chain runs to 156 residues: Arginine repressor (156 aa).

It belongs to the ArgR family.

Its subcellular location is the cytoplasm. Its pathway is amino-acid biosynthesis; L-arginine biosynthesis [regulation]. Regulates arginine biosynthesis genes. In Cronobacter sakazakii (strain ATCC BAA-894) (Enterobacter sakazakii), this protein is Arginine repressor.